A 369-amino-acid chain; its full sequence is S-adenosylmethionine decarboxylase proenzyme 2 (369 aa).

Catalysis depends on residues glutamate 9 and glutamate 12. The Schiff-base intermediate with substrate; via pyruvic acid role is filled by serine 69. The residue at position 69 (serine 69) is a Pyruvic acid (Ser); by autocatalysis. The Proton donor; for catalytic activity role is filled by cysteine 83. Catalysis depends on proton acceptor; for processing activity residues serine 236 and histidine 249.

Belongs to the eukaryotic AdoMetDC family. The cofactor is pyruvate. Is synthesized initially as an inactive proenzyme. Formation of the active enzyme involves a self-maturation process in which the active site pyruvoyl group is generated from an internal serine residue via an autocatalytic post-translational modification. Two non-identical subunits are generated from the proenzyme in this reaction, and the pyruvate is formed at the N-terminus of the alpha chain, which is derived from the carboxyl end of the proenzyme. The post-translation cleavage follows an unusual pathway, termed non-hydrolytic serinolysis, in which the side chain hydroxyl group of the serine supplies its oxygen atom to form the C-terminus of the beta chain, while the remainder of the serine residue undergoes an oxidative deamination to produce ammonia and the pyruvoyl group blocking the N-terminus of the alpha chain.

The catalysed reaction is S-adenosyl-L-methionine + H(+) = S-adenosyl 3-(methylsulfanyl)propylamine + CO2. The protein operates within amine and polyamine biosynthesis; S-adenosylmethioninamine biosynthesis; S-adenosylmethioninamine from S-adenosyl-L-methionine: step 1/1. This Brassica juncea (Indian mustard) protein is S-adenosylmethionine decarboxylase proenzyme 2 (SAMDC2).